The sequence spans 605 residues: Capsid scaffolding protein (605 aa).

Active-site charge relay system residues include histidine 48, serine 116, and histidine 139. The disordered stretch occupies residues 235 to 274 (ASDAPDLQKPDKALQSPPPASTDPATMLSGNAGEGATACG). Residues 281–300 (QDLISVPRNTFMTLLQTNLD) form an interaction with pAP region. Disordered regions lie at residues 403-432 (DYVP…PGED) and 489-588 (PHQS…KSVS). The Nuclear localization signal signature appears at 410–416 (RSNKRKR). A compositionally biased stretch (polar residues) spans 568-579 (ASASGVAQSKEP). The interval 585–605 (KSVSAHLKSIFCEELLNKRVA) is interaction with major capsid protein.

It belongs to the herpesviridae capsid scaffolding protein family. As to quaternary structure, homomultimer. Interacts with major capsid protein. Exists in a monomer-dimer equilibrium with the dimer being the active species. Capsid scaffolding protein is cleaved by assemblin after formation of the spherical procapsid. As a result, the capsid obtains its mature, icosahedral shape. Cleavages occur at two or more sites: release (R-site) and maturation (M-site).

The protein localises to the host cytoplasm. Its subcellular location is the host nucleus. It catalyses the reaction Cleaves -Ala-|-Ser- and -Ala-|-Ala- bonds in the scaffold protein.. Functionally, acts as a scaffold protein by binding major capsid protein in the cytoplasm, inducing the nuclear localization of both proteins. Multimerizes in the nucleus such as major capsid protein forms the icosahedral T=16 capsid. Autocatalytic cleavage releases the assembly protein, and subsequently abolishes interaction with major capsid protein. Cleavages products are evicted from the capsid before or during DNA packaging. Protease that plays an essential role in virion assembly within the nucleus. Catalyzes the cleavage of the assembly protein after formation of the spherical procapsid. By that cleavage, the capsid matures and gains its icosahedral shape. The cleavage sites seem to include -Ala-Ser-, -Ala-Ala-, as well as Ala-Thr bonds. Assemblin and cleavages products are evicted from the capsid before or during DNA packaging. Its function is as follows. Plays a major role in capsid assembly. Acts as a scaffold protein by binding major capsid protein. Multimerizes in the nucleus such as major capsid protein forms the icosahedral T=16 capsid. Cleaved by assemblin after capsid completion. The cleavages products are evicted from the capsid before or during DNA packaging. This Homo sapiens (Human) protein is Capsid scaffolding protein.